A 91-amino-acid polypeptide reads, in one-letter code: Small ribosomal subunit protein uS15 (91 aa).

It belongs to the universal ribosomal protein uS15 family. Part of the 30S ribosomal subunit. Forms a bridge to the 50S subunit in the 70S ribosome, contacting the 23S rRNA.

In terms of biological role, one of the primary rRNA binding proteins, it binds directly to 16S rRNA where it helps nucleate assembly of the platform of the 30S subunit by binding and bridging several RNA helices of the 16S rRNA. Its function is as follows. Forms an intersubunit bridge (bridge B4) with the 23S rRNA of the 50S subunit in the ribosome. This is Small ribosomal subunit protein uS15 from Rickettsia africae (strain ESF-5).